A 184-amino-acid polypeptide reads, in one-letter code: Elongation factor P (184 aa).

It belongs to the elongation factor P family.

It is found in the cytoplasm. The protein operates within protein biosynthesis; polypeptide chain elongation. In terms of biological role, involved in peptide bond synthesis. Stimulates efficient translation and peptide-bond synthesis on native or reconstituted 70S ribosomes in vitro. Probably functions indirectly by altering the affinity of the ribosome for aminoacyl-tRNA, thus increasing their reactivity as acceptors for peptidyl transferase. The sequence is that of Elongation factor P from Acidovorax ebreus (strain TPSY) (Diaphorobacter sp. (strain TPSY)).